A 410-amino-acid polypeptide reads, in one-letter code: Cytosolic isocitrate dehydrogenase [NADP] (410 aa).

Residues Thr77–Thr79 and Arg84 contribute to the NADP(+) site. Thr79 lines the substrate pocket. Substrate-binding positions include Ser96 to Arg102, Arg111, and Arg134. Lys260 lines the NADP(+) pocket. Asp275 and Asp279 together coordinate Mn(2+). NADP(+)-binding positions include Gly310 to His315 and Asn328.

This sequence belongs to the isocitrate and isopropylmalate dehydrogenases family. The cofactor is Mg(2+). Requires Mn(2+) as cofactor.

The protein resides in the cytoplasm. It is found in the cytosol. It carries out the reaction D-threo-isocitrate + NADP(+) = 2-oxoglutarate + CO2 + NADPH. Its function is as follows. May supply 2-oxoglutarate for amino acid biosynthesis and ammonia assimilation via the glutamine synthetase/glutamate synthase (GS/GOGAT) pathway. May be involved in the production of NADPH to promote redox signaling or homeostasis in response to oxidative stress, or redox signaling linked to defense responses. In Arabidopsis thaliana (Mouse-ear cress), this protein is Cytosolic isocitrate dehydrogenase [NADP].